The sequence spans 104 residues: Ig lambda-1 chain C region (104 aa).

The region spanning Pro6 to Ser99 is the Ig-like domain. A disulfide bridge connects residues Cys27 and Cys85.

The polypeptide is Ig lambda-1 chain C region (Rattus norvegicus (Rat)).